Here is a 246-residue protein sequence, read N- to C-terminus: Mediator of RNA polymerase II transcription subunit 6 (246 aa).

Residues 193 to 246 (VQLKPGEKPVPVDQTKKEAEPIPETVKPEEKETTKNVQQTVSAKGPPEKRMRLQ) form a disordered region. The span at 206–226 (QTKKEAEPIPETVKPEEKETT) shows a compositional bias: basic and acidic residues. A Glycyl lysine isopeptide (Lys-Gly) (interchain with G-Cter in SUMO2) cross-link involves residue K208. Residues K236 and K241 each carry the N6-acetyllysine modification.

This sequence belongs to the Mediator complex subunit 6 family. Component of the Mediator complex, which is composed of MED1, MED4, MED6, MED7, MED8, MED9, MED10, MED11, MED12, MED13, MED13L, MED14, MED15, MED16, MED17, MED18, MED19, MED20, MED21, MED22, MED23, MED24, MED25, MED26, MED27, MED29, MED30, MED31, CCNC, CDK8 and CDC2L6/CDK11. The MED12, MED13, CCNC and CDK8 subunits form a distinct module termed the CDK8 module. Mediator containing the CDK8 module is less active than Mediator lacking this module in supporting transcriptional activation. Individual preparations of the Mediator complex lacking one or more distinct subunits have been variously termed ARC, CRSP, DRIP, PC2, SMCC and TRAP. Interacts with CTNNB1 and GLI3.

The protein resides in the nucleus. Its function is as follows. Component of the Mediator complex, a coactivator involved in the regulated transcription of nearly all RNA polymerase II-dependent genes. Mediator functions as a bridge to convey information from gene-specific regulatory proteins to the basal RNA polymerase II transcription machinery. Mediator is recruited to promoters by direct interactions with regulatory proteins and serves as a scaffold for the assembly of a functional preinitiation complex with RNA polymerase II and the general transcription factors. This chain is Mediator of RNA polymerase II transcription subunit 6 (MED6), found in Homo sapiens (Human).